Consider the following 649-residue polypeptide: MPVEEPLATLSSIPDSSADQAPPLIADEFTLDLPRIPSLELPLNVSTKHSSIQKAIKMCGGIEKVKEAFKEHGPIESQHGLQLYLNDDTDSDGSKSYFNEHPVIGKRVPFRDESVILKVTMPKGTLSKNNNSVKDSIKSLKDSNKLRVTPVSIVDNTIKFREMSDFQIKLDNVPSAREFKSSFGSLEWNNFKSFVNSVPDNDSQPQENIGNLILDRSVKIPSTDFQLPPPPKLSMVGFPLLYKYKANPFAKKKKNGVTEVKGTYIKNYQLFVHDLSDKTVIPSQAHEQVLYDFEVAKKTKVYPGTKSDSKFYESLEECLKILRELFARRPIWVKRHLDGIVPKKIHHTMKIALALISYRFTMGPWRNTYIKFGIDPRSSVEYAQYQTEYFKIERKLLSSPIVKKNVPKPPPLVFESDTPGGIDSRFKFDGKRIPWYLMLQIDLLIGEPNIAEVFHNVEYLDKANELTGWFKELDLVKIRRIVKYELGCMVQGNYEYNKYKLKYFKTMLFVKESMVPENKNSEEGMGVNTNKDADGDINMDAGSQMSSNAIEEDKGIAAGDDFDDNGAITEEPDDAALENEEMDTDQNLKVPASIDDDVDDVDADEEEQESFDVKTASFQDIINKIAKLDPKTAETMKSELKGFVDEVDL.

Residues 1-21 (MPVEEPLATLSSIPDSSADQA) form a disordered region. A compositionally biased stretch (polar residues) spans 9 to 19 (TLSSIPDSSAD). The stretch at 221-239 (PSTDFQLPPPPKLSMVGFP) is repeat 1. A 2 X repeats, Pro-rich region spans residues 221–419 (PSTDFQLPPP…PPLVFESDTP (199 aa)). Residues 296–300 (AKKTK) carry the Nuclear localization signal motif. Repeat unit 2 spans residues 400–419 (PIVKKNVPKPPPLVFESDTP). Residues 556 to 612 (IAAGDDFDDNGAITEEPDDAALENEEMDTDQNLKVPASIDDDVDDVDADEEEQESFD) are disordered. Composition is skewed to acidic residues over residues 560–584 (DDFD…EMDT) and 594–610 (IDDD…EQES). A Phosphoserine modification is found at serine 617.

It belongs to the TFIIIC subunit 5 family. Component of the TFIIIC complex composed of TFC1, TFC3, TFC4, TFC6, TFC7 and TFC8. The subunits are organized in two globular domains, tauA and tauB, connected by a proteolysis-sensitive and flexible linker. Interacts with TFC3, TFC4 and TFC6.

The protein localises to the nucleus. In terms of biological role, TFIIIC mediates tRNA and 5S RNA gene activation by binding to intragenic promoter elements. Upstream of the transcription start site, TFIIIC assembles the initiation complex TFIIIB-TFIIIC-tDNA, which is sufficient for RNA polymerase III recruitment and function. Part of the tauA domain of TFIIIC that binds boxA DNA promoter sites of tRNA and similar genes. Participates in the interconnection of tauA with tauB via its contacts with TFC3 and TFC6. Serves as a scaffold critical for tauA-DNA spatial configuration and tauB-DNA stability. This chain is Transcription factor tau 95 kDa subunit (TFC1), found in Saccharomyces cerevisiae (strain ATCC 204508 / S288c) (Baker's yeast).